The following is an 81-amino-acid chain: uncharacterized protein (81 aa).

This is an uncharacterized protein from Sulfolobus islandicus rod-shaped virus 1 (SIRV-1).